The chain runs to 567 residues: Proline--tRNA ligase (567 aa).

It belongs to the class-II aminoacyl-tRNA synthetase family. ProS type 1 subfamily. In terms of assembly, homodimer.

It is found in the cytoplasm. The enzyme catalyses tRNA(Pro) + L-proline + ATP = L-prolyl-tRNA(Pro) + AMP + diphosphate. Catalyzes the attachment of proline to tRNA(Pro) in a two-step reaction: proline is first activated by ATP to form Pro-AMP and then transferred to the acceptor end of tRNA(Pro). As ProRS can inadvertently accommodate and process non-cognate amino acids such as alanine and cysteine, to avoid such errors it has two additional distinct editing activities against alanine. One activity is designated as 'pretransfer' editing and involves the tRNA(Pro)-independent hydrolysis of activated Ala-AMP. The other activity is designated 'posttransfer' editing and involves deacylation of mischarged Ala-tRNA(Pro). The misacylated Cys-tRNA(Pro) is not edited by ProRS. This is Proline--tRNA ligase from Geobacillus thermodenitrificans (strain NG80-2).